The chain runs to 1072 residues: Carbamoyl phosphate synthase large chain (1072 aa).

The tract at residues 1–401 is carboxyphosphate synthetic domain; the sequence is MPKRLDINTI…SLLKAVRSLE (401 aa). Residues arginine 129, arginine 169, glycine 175, glycine 176, lysine 208, isoleucine 210, glutamate 215, glycine 241, valine 242, histidine 243, glutamine 284, and glutamate 298 each contribute to the ATP site. In terms of domain architecture, ATP-grasp 1 spans 133 to 327; sequence RTLMQDLNEP…IAKLAAKIAV (195 aa). Mg(2+)-binding residues include glutamine 284, glutamate 298, and asparagine 300. Mn(2+) contacts are provided by glutamine 284, glutamate 298, and asparagine 300. The interval 402–546 is oligomerization domain; sequence LGIYHLELDH…YSTYADENES (145 aa). The carbamoyl phosphate synthetic domain stretch occupies residues 547–929; sequence IVTDRKSVVV…ALYKGLVASG (383 aa). The 191-residue stretch at 671-861 folds into the ATP-grasp 2 domain; that stretch reads EAALTKLGIP…MANVATKVIL (191 aa). Residues arginine 707, arginine 746, glutamate 752, glycine 777, valine 778, histidine 779, serine 780, glutamine 820, and glutamate 832 each contribute to the ATP site. Glutamine 820, glutamate 832, and asparagine 834 together coordinate Mg(2+). The Mn(2+) site is built by glutamine 820, glutamate 832, and asparagine 834. The MGS-like domain occupies 930–1072; that stretch reads INIPTHGSVI…QTKRHEVVHA (143 aa). Residues 930–1072 are allosteric domain; the sequence is INIPTHGSVI…QTKRHEVVHA (143 aa).

It belongs to the CarB family. As to quaternary structure, composed of two chains; the small (or glutamine) chain promotes the hydrolysis of glutamine to ammonia, which is used by the large (or ammonia) chain to synthesize carbamoyl phosphate. Tetramer of heterodimers (alpha,beta)4. Mg(2+) serves as cofactor. It depends on Mn(2+) as a cofactor.

The catalysed reaction is hydrogencarbonate + L-glutamine + 2 ATP + H2O = carbamoyl phosphate + L-glutamate + 2 ADP + phosphate + 2 H(+). The enzyme catalyses hydrogencarbonate + NH4(+) + 2 ATP = carbamoyl phosphate + 2 ADP + phosphate + 2 H(+). It participates in amino-acid biosynthesis; L-arginine biosynthesis; carbamoyl phosphate from bicarbonate: step 1/1. Its pathway is pyrimidine metabolism; UMP biosynthesis via de novo pathway; (S)-dihydroorotate from bicarbonate: step 1/3. Functionally, large subunit of the glutamine-dependent carbamoyl phosphate synthetase (CPSase). CPSase catalyzes the formation of carbamoyl phosphate from the ammonia moiety of glutamine, carbonate, and phosphate donated by ATP, constituting the first step of 2 biosynthetic pathways, one leading to arginine and/or urea and the other to pyrimidine nucleotides. The large subunit (synthetase) binds the substrates ammonia (free or transferred from glutamine from the small subunit), hydrogencarbonate and ATP and carries out an ATP-coupled ligase reaction, activating hydrogencarbonate by forming carboxy phosphate which reacts with ammonia to form carbamoyl phosphate. This Bacillus cereus (strain B4264) protein is Carbamoyl phosphate synthase large chain.